Reading from the N-terminus, the 1531-residue chain is Multidrug resistance-associated protein 1 (1531 aa).

At 1–33 (MALRGFCSADGSDPLWDWNVTWYTSNPDFTKCF) the chain is on the extracellular side. An N-linked (GlcNAc...) asparagine glycan is attached at Asn-19. The helical transmembrane segment at 34–54 (QNTVLVWVPCFYLWACFPFYF) threads the bilayer. At 55 to 74 (LYLSRHDRGYIQMTLLNKTK) the chain is on the cytoplasmic side. Residues 75 to 95 (TALGFLLWIVCWADLFYSFWE) form a helical membrane-spanning segment. The Extracellular portion of the chain corresponds to 96–100 (RSRGI). A helical transmembrane segment spans residues 101-121 (FLAPVFLVSPTLLGITMLLAT). The Cytoplasmic portion of the chain corresponds to 122–133 (FLIQLERRKGVQ). Residues 134–154 (SSGIMLTFWLVALLCALAILR) traverse the membrane as a helical segment. The Extracellular segment spans residues 155 to 172 (SKIMTALKEDVQVDLFRD). A helical membrane pass occupies residues 173–193 (MTFYVYFSLVLIQLVLSCFSD). Over 194–316 (RSPLFSETIH…KEWNPSLFKV (123 aa)) the chain is Cytoplasmic. Tyr-277 carries the post-translational modification Phosphotyrosine. Ser-289 carries the post-translational modification Phosphoserine. Residues 317-337 (LYKTFGPYFLMSFFFKAIHDL) form a helical membrane-spanning segment. In terms of domain architecture, ABC transmembrane type-1 1 spans 325-608 (FLMSFFFKAI…LPMVISSIVQ (284 aa)). Residues 338-363 (MMFSGPEILKLLINFVNDTKAPDWQG) lie on the Extracellular side of the membrane. The helical transmembrane segment at 364 to 384 (YFYTALLFVAACLQTLVLHQY) threads the bilayer. Residues 385–440 (FHICFVSGMRIKTAVIGAVYRKALVITNAARKSSTVGEIVNLMSVDAQRFMDLATY) lie on the Cytoplasmic side of the membrane. The helical transmembrane segment at 441-461 (INMIWSAPLQVILALYLLWRN) threads the bilayer. Residues 462-464 (LGP) lie on the Extracellular side of the membrane. Residues 465–485 (PILAGVAVMVLMVPVNAVMAM) form a helical membrane-spanning segment. Residues 486-547 (KTKTYQVAHM…VLKKSAYLAA (62 aa)) are Cytoplasmic-facing. Residue Lys-503 is modified to N6-succinyllysine. A helical transmembrane segment spans residues 548-568 (VGTFTWVCTPFLVALCTFAVY). Residues 569 to 590 (VTIDKNNVLDAQKAFVSLALFN) lie on the Extracellular side of the membrane. The chain crosses the membrane as a helical span at residues 591–611 (ILRFPLNILPMVISSIVQASV). The Cytoplasmic portion of the chain corresponds to 612 to 967 (SLKRLRIFLS…VKLSVYWDYM (356 aa)). Residues 644–868 (ITVRNATFTW…DGAFAEFLRT (225 aa)) form the ABC transporter 1 domain. An ATP-binding site is contributed by 678-685 (GQVGCGKS). The interval 871-893 (SAEQEQDPEDNGVTGVSGPGKEA) is disordered. A phosphoserine mark is found at Ser-905, Ser-915, and Ser-930. Positions 917-938 (SSSYSGDVSRQHNSTAELQKDG) are disordered. Residues 922 to 933 (GDVSRQHNSTAE) are compositionally biased toward polar residues. A helical membrane pass occupies residues 968-988 (KAIGLFISFLSIFLFICNHVA). Positions 975 to 1256 (SFLSIFLFIC…LVRMSSEMET (282 aa)) constitute an ABC transmembrane type-1 2 domain. Topologically, residues 989–1025 (ALASNYWLSLWTDDPIVNGTQEHTKVRLSVYGALGIS) are extracellular. N-linked (GlcNAc...) asparagine glycosylation occurs at Asn-1006. A helical membrane pass occupies residues 1026 to 1046 (QGIAVFGYSMAVSIGGILASR). The Cytoplasmic portion of the chain corresponds to 1047–1089 (CLHVDLLHSILRSPMSFFERTPSGNLVNRFSKELDTVDSMIPE). A helical membrane pass occupies residues 1090-1110 (VIKMFMGSLFNVIGACIVILL). Position 1111 (Ala-1111) is a topological domain, extracellular. A helical transmembrane segment spans residues 1112–1132 (TPIAAIIIPPLGLIYFFVQRF). The Cytoplasmic segment spans residues 1133-1203 (YVASSRQLKR…VANRWLAVRL (71 aa)). The chain crosses the membrane as a helical span at residues 1204-1224 (ECVGNCIVLFAALFAVISRHS). Residues 1225-1226 (LS) are Extracellular-facing. Residues 1227–1247 (AGLVGLSVSYSLQVTTYLNWL) traverse the membrane as a helical segment. The Cytoplasmic segment spans residues 1248 to 1531 (VRMSSEMETN…YNMARDAGLV (284 aa)). One can recognise an ABC transporter 2 domain in the interval 1293–1527 (VEFRNYCLRY…RGLFYNMARD (235 aa)). Residue 1327–1334 (GRTGAGKS) coordinates ATP.

The protein belongs to the ABC transporter superfamily. ABCC family. Conjugate transporter (TC 3.A.1.208) subfamily.

It localises to the cell membrane. The protein resides in the basolateral cell membrane. The enzyme catalyses ATP + H2O + xenobioticSide 1 = ADP + phosphate + xenobioticSide 2.. It catalyses the reaction an S-substituted glutathione(in) + ATP + H2O = an S-substituted glutathione(out) + ADP + phosphate + H(+). The catalysed reaction is sphing-4-enine 1-phosphate(in) + ATP + H2O = sphing-4-enine 1-phosphate(out) + ADP + phosphate + H(+). It carries out the reaction leukotriene C4(in) + ATP + H2O = leukotriene C4(out) + ADP + phosphate + H(+). The enzyme catalyses 17beta-estradiol 17-O-(beta-D-glucuronate)(in) + ATP + H2O = 17beta-estradiol 17-O-(beta-D-glucuronate)(out) + ADP + phosphate + H(+). It catalyses the reaction daunorubicin(in) + ATP + H2O = daunorubicin(out) + ADP + phosphate + H(+). The catalysed reaction is vincristine(in) + ATP + H2O = vincristine(out) + ADP + phosphate + H(+). It carries out the reaction 2',3'-cGAMP(in) + ATP + H2O = 2',3'-cGAMP(out) + ADP + phosphate + H(+). The enzyme catalyses S-[(2E,6E,10E)-geranylgeranyl]-L-glutathione(in) + ATP + H2O = S-[(2E,6E,10E)-geranylgeranyl]-L-glutathione(out) + ADP + phosphate + H(+). It catalyses the reaction prostaglandin A2-S-(R)-glutathione(in) + ATP + H2O = prostaglandin A2-S-(R)-glutathione(out) + ADP + phosphate + H(+). The catalysed reaction is prostaglandin A2-S-(S)-glutathione(in) + ATP + H2O = prostaglandin A2-S-(S)-glutathione(out) + ADP + phosphate + H(+). MK 571 inhibits sphingosine 1-phosphate and leukotriene C4 export. Its function is as follows. Mediates export of organic anions and drugs from the cytoplasm. Mediates ATP-dependent transport of glutathione and glutathione conjugates, leukotriene C4, estradiol-17-beta-o-glucuronide, methotrexate, antiviral drugs and other xenobiotics. Confers resistance to anticancer drugs by decreasing accumulation of drug in cells, and by mediating ATP- and GSH-dependent drug export. Hydrolyzes ATP with low efficiency. Catalyzes the export of sphingosine 1-phosphate from mast cells independently of their degranulation. Participates in inflammatory response by allowing export of leukotriene C4 from leukotriene C4-synthesizing cells. Mediates ATP-dependent, GSH-independent cyclic GMP-AMP (cGAMP) export. Thus, by limiting intracellular cGAMP concentrations negatively regulates the cGAS-STING pathway. Exports S-geranylgeranyl-glutathione (GGG) in lymphoid cells and stromal compartments of lymphoid organs. ABCC1 (via extracellular transport) with GGT5 (via GGG catabolism) establish GGG gradients within lymphoid tissues to position P2RY8-positive lymphocytes at germinal centers in lymphoid follicles and restrict their chemotactic transmigration from blood vessels to the bone marrow parenchyma. Mediates basolateral export of GSH-conjugated R- and S-prostaglandin A2 diastereomers in polarized epithelial cells. In Macaca fascicularis (Crab-eating macaque), this protein is Multidrug resistance-associated protein 1.